Here is an 87-residue protein sequence, read N- to C-terminus: Small ribosomal subunit protein bS20 (87 aa).

The protein belongs to the bacterial ribosomal protein bS20 family.

Binds directly to 16S ribosomal RNA. The chain is Small ribosomal subunit protein bS20 from Corynebacterium urealyticum (strain ATCC 43042 / DSM 7109).